The primary structure comprises 391 residues: Phosphoglycerate kinase (391 aa).

Substrate is bound by residues 21–23 (DLN), arginine 36, 59–62 (HLGR), arginine 114, and arginine 147. ATP-binding positions include lysine 198, glutamate 315, and 344–347 (GGDT).

Belongs to the phosphoglycerate kinase family. In terms of assembly, monomer.

The protein resides in the cytoplasm. It carries out the reaction (2R)-3-phosphoglycerate + ATP = (2R)-3-phospho-glyceroyl phosphate + ADP. Its pathway is carbohydrate degradation; glycolysis; pyruvate from D-glyceraldehyde 3-phosphate: step 2/5. The polypeptide is Phosphoglycerate kinase (Haemophilus ducreyi (strain 35000HP / ATCC 700724)).